We begin with the raw amino-acid sequence, 441 residues long: Probable dihydroorotase-like protein (441 aa).

A disordered region spans residues 121–140 (VNAHHQPPGDPQAENRPDSA).

This sequence belongs to the metallo-dependent hydrolases superfamily. DHOase family. PyrC' subfamily.

Non-functional DHOase. This chain is Probable dihydroorotase-like protein (pyrC'), found in Synechocystis sp. (strain ATCC 27184 / PCC 6803 / Kazusa).